Consider the following 310-residue polypeptide: HPr kinase/phosphorylase 1 (310 aa).

Active-site residues include His139 and Lys160. Residue 154-161 (GQSGVGKS) coordinates ATP. Residue Ser161 participates in Mg(2+) binding. The active-site Proton acceptor; for phosphorylation activity. Proton donor; for dephosphorylation activity is Asp178. Residues 202-211 (LEIRGLGIIN) are important for the catalytic mechanism of both phosphorylation and dephosphorylation. Glu203 is a Mg(2+) binding site. Residue Arg244 is part of the active site. The interval 265-270 (PVRPGR) is important for the catalytic mechanism of dephosphorylation.

Belongs to the HPrK/P family. Homohexamer. Requires Mg(2+) as cofactor.

It carries out the reaction [HPr protein]-L-serine + ATP = [HPr protein]-O-phospho-L-serine + ADP + H(+). The catalysed reaction is [HPr protein]-O-phospho-L-serine + phosphate + H(+) = [HPr protein]-L-serine + diphosphate. In terms of biological role, catalyzes the ATP- as well as the pyrophosphate-dependent phosphorylation of a specific serine residue in HPr, a phosphocarrier protein of the phosphoenolpyruvate-dependent sugar phosphotransferase system (PTS). HprK/P also catalyzes the pyrophosphate-producing, inorganic phosphate-dependent dephosphorylation (phosphorolysis) of seryl-phosphorylated HPr (P-Ser-HPr). The two antagonistic activities of HprK/P are regulated by several intracellular metabolites, which change their concentration in response to the absence or presence of rapidly metabolisable carbon sources (glucose, fructose, etc.) in the growth medium. Also phosphorylates/dephosphorylates the HPr-like catabolite repression protein crh on a specific serine residue. Therefore, by controlling the phosphorylation state of HPr and crh, HPrK/P is a sensor enzyme that plays a major role in the regulation of carbon metabolism and sugar transport: it mediates carbon catabolite repression (CCR), and regulates PTS-catalyzed carbohydrate uptake and inducer exclusion. The sequence is that of HPr kinase/phosphorylase 1 (hprK1) from Oceanobacillus iheyensis (strain DSM 14371 / CIP 107618 / JCM 11309 / KCTC 3954 / HTE831).